Consider the following 212-residue polypeptide: HTH-type transcriptional regulator RutR (212 aa).

Positions 17-77 constitute an HTH tetR-type domain; sequence SAKKKAILSA…AVLRQILDIW (61 aa). The H-T-H motif DNA-binding region spans 39–58; that stretch reads TRLEQIAELAGVSKTNLLYY.

As to quaternary structure, homodimer.

In terms of biological role, master transcription regulator which represses the degradation of pyrimidines (rutABCDEFG) and purines (gcl operon) for maintenance of metabolic balance between pyrimidines and purines. It also regulates the synthesis of pyrimidine nucleotides and arginine from glutamine (carAB) and the supply of glutamate (gadABWX). This chain is HTH-type transcriptional regulator RutR (rutR), found in Escherichia coli O6:H1 (strain CFT073 / ATCC 700928 / UPEC).